The primary structure comprises 1283 residues: Oxysterol-binding protein homolog 2 (1283 aa).

Position 2 is an N-acetylserine (Ser2). Ser7 is modified (phosphoserine). ANK repeat units follow at residues 106–134 (NGNT…SIND) and 206–235 (TGTT…EATV). Residues 289–386 (PPTYKGFLKK…WVNAIQSAIR (98 aa)) enclose the PH domain. Ser422, Ser445, Ser451, Ser455, Ser458, Ser459, and Ser486 each carry phosphoserine. The residue at position 488 (Thr488) is a Phosphothreonine. Composition is skewed to polar residues over residues 504–518 (SNTL…SGSG) and 530–551 (ANLS…NNYI). Disordered stretches follow at residues 504–571 (SNTL…LGIN) and 702–721 (TAGN…DTTA). 2 positions are modified to phosphoserine: Ser512 and Ser515. The segment covering 554 to 568 (FEGDEANSDDEEEDL) has biased composition (acidic residues). Residues 707 to 716 (ESLENDKEQE) show a composition bias toward basic and acidic residues. A Phosphoserine modification is found at Ser717. An FFAT motif is present at residues 745–751 (EFYDAAE). Residues 767 to 834 (STAAAPKHAP…SLKNFKAEDK (68 aa)) are disordered. Thr783 is modified (phosphothreonine). Phosphoserine is present on Ser787. Composition is skewed to basic and acidic residues over residues 791 to 810 (QDEK…KFEK) and 818 to 834 (DEPK…AEDK). 2 positions are modified to phosphoserine: Ser825 and Ser1151. The interval 897-1268 (SLWAVLKSMV…KYWRYTGKYW (372 aa)) is OSBP-related domain (ORD).

Belongs to the OSBP family. In terms of assembly, interacts with SCS2.

The protein resides in the cell membrane. The protein localises to the endoplasmic reticulum membrane. In terms of biological role, lipid transport protein (LTP) involved in non-vesicular transfer of lipids between membranes. Functions in phosphoinositide-coupled directional transport of various lipids by carrying the lipid molecule in a hydrophobic pocket and transferring it between membranes through the cytosol. Involved in maintenance of intracellular sterol distribution and homeostasis. Binds and transports sterol. Plays a role in the positive regulation of vesicular transport of ceramide from the ER to the Golgi, negatively regulating COPII-mediated ER export of cargos. This is Oxysterol-binding protein homolog 2 from Saccharomyces cerevisiae (strain ATCC 204508 / S288c) (Baker's yeast).